Reading from the N-terminus, the 394-residue chain is Nicotinate phosphoribosyltransferase (394 aa).

Residue histidine 218 is modified to Phosphohistidine; by autocatalysis.

The protein belongs to the NAPRTase family. Post-translationally, transiently phosphorylated on a His residue during the reaction cycle. Phosphorylation strongly increases the affinity for substrates and increases the rate of nicotinate D-ribonucleotide production. Dephosphorylation regenerates the low-affinity form of the enzyme, leading to product release.

It carries out the reaction nicotinate + 5-phospho-alpha-D-ribose 1-diphosphate + ATP + H2O = nicotinate beta-D-ribonucleotide + ADP + phosphate + diphosphate. Its pathway is cofactor biosynthesis; NAD(+) biosynthesis; nicotinate D-ribonucleotide from nicotinate: step 1/1. Catalyzes the synthesis of beta-nicotinate D-ribonucleotide from nicotinate and 5-phospho-D-ribose 1-phosphate at the expense of ATP. The protein is Nicotinate phosphoribosyltransferase of Xylella fastidiosa (strain Temecula1 / ATCC 700964).